Reading from the N-terminus, the 606-residue chain is Lysosomal cobalamin transporter ABCD4 (606 aa).

In terms of domain architecture, ABC transmembrane type-1 spans 39–332; sequence NVLMFMTLLC…CFTQLIDLST (294 aa). The next 5 membrane-spanning stretches (helical) occupy residues 43–63, 76–96, 190–210, 279–299, and 314–334; these read FMTLLCVTLLEQLVIYQVGLI, LDGFKALTLLAVTLIVLNSTL, IFGYFIVGTMVNKTLMGPIVT, YLGSILSYVVIAIPIFSGVYG, and AFVCIYLISCFTQLIDLSTTL. Residues 389-603 form the ABC transporter domain; sequence LDRVSILAPS…GGGSWELTRI (215 aa). 421–428 provides a ligand contact to ATP; that stretch reads GNTGTGKT.

The protein belongs to the ABC transporter superfamily. ABCD family. Peroxisomal fatty acyl CoA transporter (TC 3.A.1.203) subfamily. Homodimer or heterodimer. Interacts with LMBRD1; this interaction induces the translocation of ABCD4 from the ER to the lysosome membrane. Interacts with LMBRD1 and MMACHC; this interaction ensures the transport of cobalamin from the lysosome to the cytosol.

Its subcellular location is the endoplasmic reticulum membrane. The protein localises to the lysosome membrane. The catalysed reaction is an R-cob(III)alamin(out) + ATP + H2O = an R-cob(III)alamin(in) + ADP + phosphate + H(+). Functionally, lysosomal membrane protein that transports cobalamin (Vitamin B12) from the lysosomal lumen to the cytosol in an ATP-dependent manner. Targeted by LMBRD1 lysosomal chaperone from the endoplasmic reticulum to the lysosomal membrane. Then forms a complex with lysosomal chaperone LMBRD1 and cytosolic MMACHC to transport cobalamin across the lysosomal membrane. In Mus musculus (Mouse), this protein is Lysosomal cobalamin transporter ABCD4.